Here is a 275-residue protein sequence, read N- to C-terminus: 4-hydroxy-3-methylbut-2-enyl diphosphate reductase (275 aa).

Position 12 (cysteine 12) interacts with [4Fe-4S] cluster. Residues histidine 40 and histidine 70 each coordinate (2E)-4-hydroxy-3-methylbut-2-enyl diphosphate. Positions 40 and 70 each coordinate dimethylallyl diphosphate. Residues histidine 40 and histidine 70 each coordinate isopentenyl diphosphate. Residue cysteine 92 coordinates [4Fe-4S] cluster. Histidine 119 contributes to the (2E)-4-hydroxy-3-methylbut-2-enyl diphosphate binding site. Histidine 119 provides a ligand contact to dimethylallyl diphosphate. Histidine 119 provides a ligand contact to isopentenyl diphosphate. Glutamate 121 (proton donor) is an active-site residue. Residue threonine 151 coordinates (2E)-4-hydroxy-3-methylbut-2-enyl diphosphate. Cysteine 181 is a [4Fe-4S] cluster binding site. (2E)-4-hydroxy-3-methylbut-2-enyl diphosphate contacts are provided by serine 209, serine 210, asparagine 211, and serine 251. The dimethylallyl diphosphate site is built by serine 209, serine 210, asparagine 211, and serine 251. The isopentenyl diphosphate site is built by serine 209, serine 210, asparagine 211, and serine 251.

Belongs to the IspH family. [4Fe-4S] cluster is required as a cofactor.

The enzyme catalyses isopentenyl diphosphate + 2 oxidized [2Fe-2S]-[ferredoxin] + H2O = (2E)-4-hydroxy-3-methylbut-2-enyl diphosphate + 2 reduced [2Fe-2S]-[ferredoxin] + 2 H(+). The catalysed reaction is dimethylallyl diphosphate + 2 oxidized [2Fe-2S]-[ferredoxin] + H2O = (2E)-4-hydroxy-3-methylbut-2-enyl diphosphate + 2 reduced [2Fe-2S]-[ferredoxin] + 2 H(+). It participates in isoprenoid biosynthesis; dimethylallyl diphosphate biosynthesis; dimethylallyl diphosphate from (2E)-4-hydroxy-3-methylbutenyl diphosphate: step 1/1. The protein operates within isoprenoid biosynthesis; isopentenyl diphosphate biosynthesis via DXP pathway; isopentenyl diphosphate from 1-deoxy-D-xylulose 5-phosphate: step 6/6. Functionally, catalyzes the conversion of 1-hydroxy-2-methyl-2-(E)-butenyl 4-diphosphate (HMBPP) into a mixture of isopentenyl diphosphate (IPP) and dimethylallyl diphosphate (DMAPP). Acts in the terminal step of the DOXP/MEP pathway for isoprenoid precursor biosynthesis. The polypeptide is 4-hydroxy-3-methylbut-2-enyl diphosphate reductase (Thermotoga maritima (strain ATCC 43589 / DSM 3109 / JCM 10099 / NBRC 100826 / MSB8)).